The following is a 359-amino-acid chain: Probably inactive receptor-like protein kinase At5g41680 (359 aa).

The Protein kinase domain maps to 59 to 357 (AASAEILGKG…KLIQDIPTNF (299 aa)). ATP contacts are provided by residues 65–73 (LGKGAHVTT) and K87.

The protein belongs to the protein kinase superfamily. Ser/Thr protein kinase family.

The chain is Probably inactive receptor-like protein kinase At5g41680 from Arabidopsis thaliana (Mouse-ear cress).